We begin with the raw amino-acid sequence, 189 residues long: dCTP deaminase (189 aa).

Residues 112–117 (KSTYAR), 136–138 (TLE), Gln-157, Tyr-171, and Gln-181 each bind dCTP. Glu-138 functions as the Proton donor/acceptor in the catalytic mechanism.

The protein belongs to the dCTP deaminase family. As to quaternary structure, homotrimer.

The enzyme catalyses dCTP + H2O + H(+) = dUTP + NH4(+). The protein operates within pyrimidine metabolism; dUMP biosynthesis; dUMP from dCTP (dUTP route): step 1/2. In terms of biological role, catalyzes the deamination of dCTP to dUTP. The protein is dCTP deaminase of Xanthomonas axonopodis pv. citri (strain 306).